The following is a 498-amino-acid chain: Tyrosine 3-monooxygenase (498 aa).

Positions 1-10 (MPTPSAPSPQ) are enriched in pro residues. Residues 1–31 (MPTPSAPSPQPKGFRRAVSEQDAKQAEAVTS) are disordered. At Ser-19 the chain carries Phosphoserine; by CaMK2. Phosphoserine is present on Ser-31. At Ser-40 the chain carries Phosphoserine; by CaMK2 and PKA. Fe cation is bound by residues His-331, His-336, and Glu-376. Phosphoserine is present on Ser-472.

The protein belongs to the biopterin-dependent aromatic amino acid hydroxylase family. As to quaternary structure, homotetramer. Interacts (when phosphorylated at Ser-19) with YWHAG; one YWHAG dimer binds to one TH tetramer and this interaction may influence the phosphorylation and dephosphorylation of other sites. Interacts with NT5DC2; the interaction results in reduced phosphorylation and decreased catalytic activity of TH. Fe(2+) is required as a cofactor. Post-translationally, phosphorylated on Ser-19, Ser-31 and Ser-40 by several protein kinases with different site specificities. Phosphorylation at Ser-31 and Ser-40 leads to an increase of TH activity. Phosphorylation at Ser-40 activates the enzyme and also counteracts the feedback inhibition of TH by catecholamines. Phosphorylation of Ser-19 and Ser-31 triggers the proteasomal degradation of TH through the ubiquitin-proteasome pathway. Phosphorylation at Ser-31 facilitates transport of TH from the soma to the nerve terminals via the microtubule network. Phosphorylation at Ser-19 induces the high-affinity binding to the 14-3-3 protein YWHAG; this interaction may influence the phosphorylation and dephosphorylation of other sites. Ser-19 increases the phosphorylation at Ser-40 in a hierarchical manner, leading to increased activity.

The protein localises to the cytoplasm. The protein resides in the perinuclear region. Its subcellular location is the nucleus. It localises to the cell projection. It is found in the axon. The protein localises to the cytoplasmic vesicle. The protein resides in the secretory vesicle. Its subcellular location is the synaptic vesicle. It carries out the reaction (6R)-L-erythro-5,6,7,8-tetrahydrobiopterin + L-tyrosine + O2 = (4aS,6R)-4a-hydroxy-L-erythro-5,6,7,8-tetrahydrobiopterin + L-dopa. It functions in the pathway catecholamine biosynthesis; dopamine biosynthesis; dopamine from L-tyrosine: step 1/2. Inhibited in feedback fashion by the catecholamine neurotransmitters, especially by dopamine in competition with tetrahydrobiopterin. Phosphorylation of several Ser/Thr residues in the N-terminus regulates the catalytic activity. Ser-31 and Ser-40 are readily phosphorylated to activate the catalytic activity. A cysteine modification induced by N-ethylmaleimide (NEM), inhibits tyrosine 3-monooxygenase activity through the modification of the Cys-177. In terms of biological role, catalyzes the conversion of L-tyrosine to L-dihydroxyphenylalanine (L-Dopa), the rate-limiting step in the biosynthesis of catecholamines, dopamine, noradrenaline, and adrenaline. Uses tetrahydrobiopterin and molecular oxygen to convert tyrosine to L-Dopa. In addition to tyrosine, is able to catalyze the hydroxylation of phenylalanine and tryptophan but with lower specificity. Positively regulates the regression of retinal hyaloid vessels during postnatal development. This chain is Tyrosine 3-monooxygenase (Th), found in Rattus norvegicus (Rat).